The chain runs to 147 residues: Transcriptional repressor NrdR (147 aa).

The segment at 3-34 (CPYCGNVETTVVETRESDEGDAVRRRRRCSAC) is a zinc-finger region. Residues 49–139 (PAVVKKNGDR…VYREFEDIDA (91 aa)) enclose the ATP-cone domain.

Belongs to the NrdR family. Zn(2+) serves as cofactor.

Functionally, negatively regulates transcription of bacterial ribonucleotide reductase nrd genes and operons by binding to NrdR-boxes. The chain is Transcriptional repressor NrdR from Leptothrix cholodnii (strain ATCC 51168 / LMG 8142 / SP-6) (Leptothrix discophora (strain SP-6)).